A 202-amino-acid chain; its full sequence is tRNA (pseudouridine(54)-N(1))-methyltransferase (202 aa).

S-adenosyl-L-methionine contacts are provided by leucine 130, glycine 152, and cysteine 185.

The protein belongs to the methyltransferase superfamily. TrmY family. In terms of assembly, homodimer.

The protein localises to the cytoplasm. It carries out the reaction pseudouridine(54) in tRNA + S-adenosyl-L-methionine = N(1)-methylpseudouridine(54) in tRNA + S-adenosyl-L-homocysteine + H(+). In terms of biological role, specifically catalyzes the N1-methylation of pseudouridine at position 54 (Psi54) in tRNAs. This Methanococcoides burtonii (strain DSM 6242 / NBRC 107633 / OCM 468 / ACE-M) protein is tRNA (pseudouridine(54)-N(1))-methyltransferase.